The following is a 1166-amino-acid chain: ATP-dependent helicase/deoxyribonuclease subunit B (1166 aa).

A UvrD-like helicase ATP-binding domain is found at methionine 1–arginine 285. Glycine 8–threonine 15 contributes to the ATP binding site. Residues glutamate 279 to aspartate 586 enclose the UvrD-like helicase C-terminal domain. Cysteine 801, cysteine 1121, cysteine 1124, and cysteine 1130 together coordinate [4Fe-4S] cluster.

This sequence belongs to the helicase family. AddB/RexB type 1 subfamily. As to quaternary structure, heterodimer of AddA and AddB. The cofactor is Mg(2+). [4Fe-4S] cluster is required as a cofactor.

The heterodimer acts as both an ATP-dependent DNA helicase and an ATP-dependent, dual-direction single-stranded exonuclease. Recognizes the chi site generating a DNA molecule suitable for the initiation of homologous recombination. The AddB subunit has 5' -&gt; 3' nuclease activity but not helicase activity. In Bacillus licheniformis (strain ATCC 14580 / DSM 13 / JCM 2505 / CCUG 7422 / NBRC 12200 / NCIMB 9375 / NCTC 10341 / NRRL NRS-1264 / Gibson 46), this protein is ATP-dependent helicase/deoxyribonuclease subunit B.